We begin with the raw amino-acid sequence, 230 residues long: Protein tumorous testis (230 aa).

One can recognise an RRM domain in the interval 37–128 (GELFLSCIPR…RELVLKNVES (92 aa)).

In terms of assembly, part of a complex composed of at least tut, bam and bgcn; complex formation does not require RNA. Interacts with bam (via N-terminus); the interaction is direct. Interacts with bgcn; the interaction is indirect and is mediated by bam. As part of the bam-bgcn-tut complex associates with twin; may recruit the CCR4-NOT1 deadenylation complex to mRNA 3'UTRs to mediate post-transcriptional regulation of expression.

The protein localises to the cytoplasm. In terms of biological role, RNA binding protein that forms a complex with bam and bgcn, involved in 3'UTR-dependent regulation of a subset of mRNAs. Preferentially binds a long isoform of mei-P26 transcripts. Involved in 3'UTR-dependent post-transcriptional repression of several 3'-RNA processing factors. Involved in promoting germline stem cell lineage differentiation and mitosis-to-meiosis transition. Required for proper transit amplification of spermatogonia. The sequence is that of Protein tumorous testis from Drosophila melanogaster (Fruit fly).